The chain runs to 371 residues: Diterpene cyclase DtcycA (371 aa).

Asn-234, Ser-238, and Glu-242 together coordinate Mg(2+).

It belongs to the terpene synthase family. As to quaternary structure, homodimer. It depends on Mg(2+) as a cofactor.

It catalyses the reaction (2E,6E,10E)-geranylgeranyl diphosphate = cembrene C + diphosphate. The catalysed reaction is (2E,6E,10E)-geranylgeranyl diphosphate + H2O = (R)-nephthenol + diphosphate. Its function is as follows. Diterpene cyclases that can form multiple diterpene products. The protein is Diterpene cyclase DtcycA of Streptomyces sp.